The following is a 272-amino-acid chain: Undecaprenyl-diphosphatase (272 aa).

Helical transmembrane passes span 5 to 25 (YSLF…FLPV), 45 to 65 (AKTF…VVFW), 88 to 108 (HLTL…GLAF), 115 to 135 (LFNP…LLAA), 152 to 171 (TYRQ…WPGF), 189 to 209 (YAAS…ASGL), 221 to 241 (GDLP…LIAI), and 251 to 271 (ISFV…YWVF).

The protein belongs to the UppP family.

The protein resides in the cell inner membrane. It carries out the reaction di-trans,octa-cis-undecaprenyl diphosphate + H2O = di-trans,octa-cis-undecaprenyl phosphate + phosphate + H(+). Its function is as follows. Catalyzes the dephosphorylation of undecaprenyl diphosphate (UPP). Confers resistance to bacitracin. This chain is Undecaprenyl-diphosphatase, found in Yersinia enterocolitica serotype O:8 / biotype 1B (strain NCTC 13174 / 8081).